The sequence spans 129 residues: Small ribosomal subunit protein uS11 (129 aa).

The protein belongs to the universal ribosomal protein uS11 family. As to quaternary structure, part of the 30S ribosomal subunit. Interacts with proteins S7 and S18. Binds to IF-3.

Located on the platform of the 30S subunit, it bridges several disparate RNA helices of the 16S rRNA. Forms part of the Shine-Dalgarno cleft in the 70S ribosome. The sequence is that of Small ribosomal subunit protein uS11 from Hyphomonas neptunium (strain ATCC 15444).